The primary structure comprises 719 residues: Translation initiation factor IF-2 (719 aa).

Over residues 54 to 67 the composition is skewed to basic and acidic residues; the sequence is NKEETKPNVDEKPP. Disordered regions lie at residues 54-75 and 97-122; these read NKEE…LTDN and STKN…KRKN. Basic residues predominate over residues 109 to 122; it reads KDKKKKNKKDKRKN. The region spanning 221 to 390 is the tr-type G domain; the sequence is HRSPVVTVMG…LLVSEMSELK (170 aa). The interval 230–237 is G1; that stretch reads GHVDHGKT. 230-237 contacts GTP; the sequence is GHVDHGKT. The segment at 255–259 is G2; sequence GITQH. Residues 276 to 279 form a G3 region; it reads DTPG. GTP contacts are provided by residues 276–280 and 330–333; these read DTPGH and NKMD. Residues 330-333 are G4; sequence NKMD. The segment at 366–368 is G5; that stretch reads SAR.

This sequence belongs to the TRAFAC class translation factor GTPase superfamily. Classic translation factor GTPase family. IF-2 subfamily.

It is found in the cytoplasm. In terms of biological role, one of the essential components for the initiation of protein synthesis. Protects formylmethionyl-tRNA from spontaneous hydrolysis and promotes its binding to the 30S ribosomal subunits. Also involved in the hydrolysis of GTP during the formation of the 70S ribosomal complex. This chain is Translation initiation factor IF-2, found in Alkaliphilus oremlandii (strain OhILAs) (Clostridium oremlandii (strain OhILAs)).